We begin with the raw amino-acid sequence, 103 residues long: MKSLILLAILAALAVVTLCYESHESMESYELNPFINRRNANTFISPQQRWRAKVQERIRERSKPVHELNREACDDYRLCERYAMVYGYNAAYNRYFRKRRGTK.

A signal peptide spans 1–19; the sequence is MKSLILLAILAALAVVTLC. Glu21 carries the 4-carboxyglutamate modification. Phosphoserine occurs at positions 22, 25, and 28. Positions 51–97 constitute a Gla domain; it reads RAKVQERIRERSKPVHELNREACDDYRLCERYAMVYGYNAAYNRYFR. Residues Glu56, Glu60, Glu67, and Glu71 each carry the 4-carboxyglutamate modification. The cysteines at positions 73 and 79 are disulfide-linked. The propeptide at 97–103 is removed in mature form; probably by carboxypeptidase N; the sequence is RKRRGTK.

The protein belongs to the osteocalcin/matrix Gla protein family. In terms of processing, requires vitamin K-dependent gamma-carboxylation for its function.

It localises to the secreted. Its function is as follows. Associates with the organic matrix of bone and cartilage. Thought to act as an inhibitor of bone formation. The protein is Matrix Gla protein (MGP) of Homo sapiens (Human).